The following is a 212-amino-acid chain: MQLFHLCLIISCSCPTVQASKLCLGWLLGMDIDPYKEFGASVELLSFLPSDFFPSVRDLLDTASALYREALESPEHCSPNHTALRQAVLCWGELMTGCSWVGNNLEDPASRELVVNYVNTNMGLKIRQLLWFHISCLTFGRETVLEYLVSFGVWIRTPPAYRPPNAPILSTLPETTVVRRRGRSPRRRTPSPRRRRSQSPRRRRSQSPASQC.

A signal peptide spans 1–19; it reads MQLFHLCLIISCSCPTVQA. An HBEAG region spans residues 25 to 27; that stretch reads GWL. The segment at 165–212 is disordered; it reads NAPILSTLPETTVVRRRGRSPRRRTPSPRRRRSQSPRRRRSQSPASQC. Residues 178-205 show a composition bias toward basic residues; the sequence is VRRRGRSPRRRTPSPRRRRSQSPRRRRS. A 1; half-length repeat occupies 184 to 190; it reads SPRRRTP. A 3 X 8 AA repeats of S-P-R-R-R-R-S-Q region spans residues 184-206; sequence SPRRRTPSPRRRRSQSPRRRRSQ. Residues 184-212 constitute a propeptide that is removed on maturation; that stretch reads SPRRRTPSPRRRRSQSPRRRRSQSPASQC. 2 consecutive repeat copies span residues 191 to 198 and 199 to 206.

The protein belongs to the orthohepadnavirus precore antigen family. As to quaternary structure, homodimerizes. Post-translationally, phosphorylated. Cleaved by host furin.

It localises to the secreted. The protein localises to the host nucleus. May regulate immune response to the intracellular capsid in acting as a T-cell tolerogen, by having an immunoregulatory effect which prevents destruction of infected cells by cytotoxic T-cells. This immune regulation may predispose to chronicity during perinatal infections and prevent severe liver injury during adult infections. In Gibbon hepatitis B virus subtype ayw3q (isolate Hope) (HBVgbn), this protein is External core antigen.